Reading from the N-terminus, the 206-residue chain is Octanoyltransferase (206 aa).

The region spanning 30 to 206 (PETNDEIWLV…EFVTLLNNSI (177 aa)) is the BPL/LPL catalytic domain. Substrate is bound by residues 69–76 (RGGQVTYH), 137–139 (SLG), and 150–152 (GIA). C168 serves as the catalytic Acyl-thioester intermediate.

The protein belongs to the LipB family.

It localises to the cytoplasm. The catalysed reaction is octanoyl-[ACP] + L-lysyl-[protein] = N(6)-octanoyl-L-lysyl-[protein] + holo-[ACP] + H(+). The protein operates within protein modification; protein lipoylation via endogenous pathway; protein N(6)-(lipoyl)lysine from octanoyl-[acyl-carrier-protein]: step 1/2. Functionally, catalyzes the transfer of endogenously produced octanoic acid from octanoyl-acyl-carrier-protein onto the lipoyl domains of lipoate-dependent enzymes. Lipoyl-ACP can also act as a substrate although octanoyl-ACP is likely to be the physiological substrate. The polypeptide is Octanoyltransferase (Francisella tularensis subsp. tularensis (strain FSC 198)).